The primary structure comprises 308 residues: Ornithine carbamoyltransferase (308 aa).

Residues 56–59 (STRT), Gln83, Arg107, and 134–137 (HPCQ) contribute to the carbamoyl phosphate site. L-ornithine-binding positions include Asn165, Asp225, and 229–230 (SM). Residues 266–267 (CL) and Arg294 each bind carbamoyl phosphate.

This sequence belongs to the aspartate/ornithine carbamoyltransferase superfamily. OTCase family.

The protein localises to the cytoplasm. It carries out the reaction carbamoyl phosphate + L-ornithine = L-citrulline + phosphate + H(+). The protein operates within amino-acid biosynthesis; L-arginine biosynthesis; L-arginine from L-ornithine and carbamoyl phosphate: step 1/3. Its function is as follows. Reversibly catalyzes the transfer of the carbamoyl group from carbamoyl phosphate (CP) to the N(epsilon) atom of ornithine (ORN) to produce L-citrulline. The protein is Ornithine carbamoyltransferase of Cereibacter sphaeroides (strain ATCC 17023 / DSM 158 / JCM 6121 / CCUG 31486 / LMG 2827 / NBRC 12203 / NCIMB 8253 / ATH 2.4.1.) (Rhodobacter sphaeroides).